The sequence spans 208 residues: Receptor expression-enhancing protein 6 (208 aa).

3 consecutive transmembrane segments (helical) span residues 49–69 (GAFL…GFVY), 93–113 (WVIY…LHWF), and 115–135 (FYYV…SWNG). The tract at residues 187–208 (VGPAESEPRSLPSSAHTEPTVD) is disordered. Residues 197–208 (LPSSAHTEPTVD) show a composition bias toward polar residues.

It belongs to the DP1 family.

The protein localises to the endoplasmic reticulum membrane. Its subcellular location is the cytoplasmic vesicle. It is found in the clathrin-coated vesicle membrane. Functionally, required correct function and survival of retinal photoreceptors. Required for retinal development. In rod photoreceptors, facilitates stability and/or trafficking of guanylate cyclases and is required to maintain endoplasmic reticulum and mitochondrial homeostasis. May play a role in clathrin-coated intracellular vesicle trafficking of proteins from the endoplasmic reticulum to the retinal rod plasma membrane. The sequence is that of Receptor expression-enhancing protein 6 from Danio rerio (Zebrafish).